The following is a 152-amino-acid chain: Pseudo histidine-containing phosphotransfer protein 5 (152 aa).

Positions 38–140 (NPNFAEEVVS…ESYFQLLRQA (103 aa)) constitute an HPt domain.

In terms of biological role, functions as a two-component phosphorelay mediator between cytokinin sensor histidine kinases and response regulators (B-type ARRs). Plays an important role in propagating cytokinin signal transduction. This is Pseudo histidine-containing phosphotransfer protein 5 from Oryza sativa subsp. japonica (Rice).